Reading from the N-terminus, the 161-residue chain is Nucleotide-binding protein Bphyt_3208 (161 aa).

Belongs to the YajQ family.

In terms of biological role, nucleotide-binding protein. The chain is Nucleotide-binding protein Bphyt_3208 from Paraburkholderia phytofirmans (strain DSM 17436 / LMG 22146 / PsJN) (Burkholderia phytofirmans).